Here is a 241-residue protein sequence, read N- to C-terminus: MAPVRRSAKWRPGGIEARGEGVSTVGYRNKNVRQKTWRPNHPQAFVGSVREGQGFAFRRKLKIQQSYKKLLRKEKKAQTSLESQFTDRYPDNLKHLYLAEEERHRKQARKVDHPLSEQVHQPLLEEQCSIDEPLFEDQCSFDQPQPEEQCIKTVNSFTIPKKNKKKTSNQKAQEEYEQIQAKRAAKKQEFERRKQEREEAQRQYKKKKMEVFKILNKKTKKGQPNLNVQMEYLLQKIQEKC.

Disordered stretches follow at residues 1 to 22 and 182 to 205; these read MAPVRRSAKWRPGGIEARGEGV and KRAAKKQEFERRKQEREEAQRQYK. Over residues 186–202 the composition is skewed to basic and acidic residues; the sequence is KKQEFERRKQEREEAQR.

The protein belongs to the TAP26 family. As to quaternary structure, interacts with NKX2-1. Ubiquitously expressed. In lung, expression is restricted to the alveolar epithelial cells.

It localises to the nucleus. Its function is as follows. Component of the transcription complexes of the pulmonary surfactant-associated protein-B (SFTPB) and -C (SFTPC). Enhances homeobox protein Nkx-2.1-activated SFTPB and SFTPC promoter activities. The sequence is that of Thyroid transcription factor 1-associated protein 26 (CCDC59) from Homo sapiens (Human).